Reading from the N-terminus, the 297-residue chain is Protein-L-isoaspartate O-methyltransferase (297 aa).

Residues 20 to 57 (RKPAPARTAGMPAVGAPGPAQAQAKARDKQPSAPTAAA) are disordered. Positions 28–43 (AGMPAVGAPGPAQAQA) are enriched in low complexity. Ser133 is a catalytic residue.

The protein belongs to the methyltransferase superfamily. L-isoaspartyl/D-aspartyl protein methyltransferase family.

Its subcellular location is the cytoplasm. It catalyses the reaction [protein]-L-isoaspartate + S-adenosyl-L-methionine = [protein]-L-isoaspartate alpha-methyl ester + S-adenosyl-L-homocysteine. Its function is as follows. Catalyzes the methyl esterification of L-isoaspartyl residues in peptides and proteins that result from spontaneous decomposition of normal L-aspartyl and L-asparaginyl residues. It plays a role in the repair and/or degradation of damaged proteins. This chain is Protein-L-isoaspartate O-methyltransferase, found in Cupriavidus pinatubonensis (strain JMP 134 / LMG 1197) (Cupriavidus necator (strain JMP 134)).